The following is a 628-amino-acid chain: tRNA(Thr) (cytosine(32)-N(3))-methyltransferase (628 aa).

Residues 1 to 18 (MGVADLIKKFESISKEEG) are compositionally biased toward basic and acidic residues. 3 disordered regions span residues 1–106 (MGVA…GENA), 124–269 (AEVL…VNDL), and 302–331 (NIAH…TEGS). Residues 22 to 31 (VDTNSSSKPL) are compositionally biased toward polar residues. Over residues 32–42 (KSNDETKELHQ) the composition is skewed to basic and acidic residues. Over residues 53 to 62 (DVNEEFENEP) the composition is skewed to acidic residues. Ser-93 carries the phosphoserine modification. Positions 132-146 (EESDAIQEGVAEETE) are enriched in acidic residues. Thr-150 carries the phosphothreonine modification. Positions 173–186 (PAEEYSQSEEDADI) are enriched in acidic residues. Over residues 196-207 (NAENASQQANDG) the composition is skewed to polar residues. The span at 215-230 (KNKKKKNKKKNKKKRN) shows a compositional bias: basic residues. The span at 231-240 (GNVNTNANVD) shows a compositional bias: polar residues. Residues Ser-321 and Ser-326 each carry the phosphoserine modification. A Phosphothreonine modification is found at Thr-347. Residues Trp-399, Tyr-403, Gly-441, Asp-466, Asp-492, Leu-493, and Ile-515 each coordinate S-adenosyl-L-methionine.

Belongs to the methyltransferase superfamily. METL family. In terms of assembly, interacts with SES1.

The protein resides in the cytoplasm. It localises to the cytoskeleton. The enzyme catalyses cytidine(32) in tRNA(Thr) + S-adenosyl-L-methionine = N(3)-methylcytidine(32) in tRNA(Thr) + S-adenosyl-L-homocysteine + H(+). It carries out the reaction cytidine(32) in tRNA(Ser) + S-adenosyl-L-methionine = N(3)-methylcytidine(32) in tRNA(Ser) + S-adenosyl-L-homocysteine + H(+). S-adenosyl-L-methionine-dependent methyltransferase that mediates N(3)-methylcytidine modification of residue 32 of the tRNA anticodon loop of tRNA(Thr) and tRNA(Ser). N(3)-methylcytidine methylation of tRNA(Thr) requires the N6-threonylcarbamoylation of tRNA (t6A37) by the EKC/KEOPS complex as prerequisite. N(3)-methylcytidine methylation of tRNA(Ser) requires the formation of N(6)-dimethylallyladenosine(37) (i6A37) by MOD5 as prerequisite. Methylation of tRNA(Ser) is also stimulated by SES1. Binds F-actin and shows weak F-actin cross-linking activity. The sequence is that of tRNA(Thr) (cytosine(32)-N(3))-methyltransferase (ABP140) from Saccharomyces cerevisiae (strain ATCC 204508 / S288c) (Baker's yeast).